A 185-amino-acid polypeptide reads, in one-letter code: Threonylcarbamoyl-AMP synthase (185 aa).

Positions 4–185 constitute a YrdC-like domain; sequence SWRVQQAARE…LATGEVVRPG (182 aa).

The protein belongs to the SUA5 family. TsaC subfamily.

It is found in the cytoplasm. The enzyme catalyses L-threonine + hydrogencarbonate + ATP = L-threonylcarbamoyladenylate + diphosphate + H2O. Required for the formation of a threonylcarbamoyl group on adenosine at position 37 (t(6)A37) in tRNAs that read codons beginning with adenine. Catalyzes the conversion of L-threonine, HCO(3)(-)/CO(2) and ATP to give threonylcarbamoyl-AMP (TC-AMP) as the acyladenylate intermediate, with the release of diphosphate. The sequence is that of Threonylcarbamoyl-AMP synthase from Pseudomonas entomophila (strain L48).